Reading from the N-terminus, the 481-residue chain is Protein JASON (481 aa).

The segment at 226–250 (ECDLDQSNSSNSSENGSSRKPEMGG) is disordered. Positions 232–241 (SNSSNSSENG) are enriched in low complexity.

In terms of biological role, required for normal spindle orientation at male meiosis II and normal formation of tetrad of microspores. Acts as a positive regulator of PS1 in male sporogenesis. Not involved in female meiosis. This chain is Protein JASON, found in Arabidopsis thaliana (Mouse-ear cress).